Consider the following 231-residue polypeptide: Ribonuclease 3 (231 aa).

Positions 1–134 constitute an RNase III domain; the sequence is MKTLEKKLAE…FLGALLLDAG (134 aa). Residue glutamate 47 coordinates Mg(2+). Aspartate 51 is a catalytic residue. Mg(2+)-binding residues include aspartate 120 and glutamate 123. Residue glutamate 123 is part of the active site. The 70-residue stretch at 160–229 folds into the DRBM domain; the sequence is DYKTALQELL…AKNALEKLQR (70 aa).

The protein belongs to the ribonuclease III family. Homodimer. Requires Mg(2+) as cofactor.

The protein resides in the cytoplasm. The enzyme catalyses Endonucleolytic cleavage to 5'-phosphomonoester.. Digests double-stranded RNA. Involved in the processing of primary rRNA transcript to yield the immediate precursors to the large and small rRNAs (23S and 16S). Also processes some mRNAs, and tRNAs when they are encoded in the rRNA operon. Functionally, CRISPR (clustered regularly interspaced short palindromic repeat) is an adaptive immune system that provides protection against mobile genetic elements (viruses, transposable elements and conjugative plasmids). CRISPR clusters contain spacers, sequences complementary to antecedent mobile elements, and target invading nucleic acids. CRISPR clusters are transcribed and processed into CRISPR RNA (crRNA). In this organism endogenous ribonuclease 3 and Cas9 are required for correct coprocessing of pre-crRNA and the trans-encoded small RNA (tracrRNA). Cas9, crRNA and tracrRNA are required for cleavage of invading DNA. Complements pre-crRNA and tracrRNA coprocessing defects in an rnc deletion in S.pyogenes strain 370. The chain is Ribonuclease 3 from Streptococcus mutans serotype c (strain ATCC 700610 / UA159).